The primary structure comprises 229 residues: Urease accessory protein UreF (229 aa).

It belongs to the UreF family. As to quaternary structure, ureD, UreF and UreG form a complex that acts as a GTP-hydrolysis-dependent molecular chaperone, activating the urease apoprotein by helping to assemble the nickel containing metallocenter of UreC. The UreE protein probably delivers the nickel.

The protein localises to the cytoplasm. Required for maturation of urease via the functional incorporation of the urease nickel metallocenter. In Corynebacterium efficiens (strain DSM 44549 / YS-314 / AJ 12310 / JCM 11189 / NBRC 100395), this protein is Urease accessory protein UreF.